A 684-amino-acid polypeptide reads, in one-letter code: Frizzled-8 (684 aa).

Positions 1–27 are cleaved as a signal peptide; it reads MEWGYLLEVTSLLAALAVLQRSSGAAA. Residues 28–271 are Extracellular-facing; it reads ASAKELACQE…NPFFSQDERA (244 aa). The FZ domain occupies 30 to 151; sequence AKELACQEIT…GNPDTLCMDY (122 aa). 5 cysteine pairs are disulfide-bonded: cysteine 35–cysteine 96, cysteine 43–cysteine 89, cysteine 80–cysteine 118, cysteine 107–cysteine 148, and cysteine 111–cysteine 135. N-linked (GlcNAc...) asparagine glycosylation occurs at asparagine 49. Position 71–78 (71–78) interacts with hexadecanoate; it reads QFWPLVEI. Positions 95–100 are wnt-binding; it reads ICLEDY. Positions 147–152 are wnt-binding; the sequence is LCMDYN. N-linked (GlcNAc...) asparagine glycosylation occurs at asparagine 152. The interval 155-222 is disordered; it reads DLTTAAPSPP…KARPPGGGAA (68 aa). Over residues 161-175 the composition is skewed to pro residues; the sequence is PSPPRRLPPPQPGEQ. Low complexity-rich tracts occupy residues 176–186 and 199–222; these read PPSGSGHSRPP and GSGDTAAAPPSRGGKARPPGGGAA. A helical transmembrane segment spans residues 272-292; the sequence is FTVFWIGLWSVLCFVSTFATV. Topologically, residues 293–308 are cytoplasmic; it reads STFLIDMERFKYPERP. Residues 309–329 traverse the membrane as a helical segment; it reads IIFLSACYLFVSVGYLVRLVA. The Extracellular segment spans residues 330–393; the sequence is GHEKVACSGG…RYETTGPALC (64 aa). Residues 394 to 414 traverse the membrane as a helical segment; that stretch reads TVVFLLVYFFGMASSIWWVIL. Residues 415–436 are Cytoplasmic-facing; the sequence is SLTWFLAAGMKWGNEAIAGYSQ. The helical transmembrane segment at 437–457 threads the bilayer; sequence YFHLAAWLVPSVKSIAVLALS. The Extracellular portion of the chain corresponds to 458 to 480; sequence SVDGDPVAGICYVGNQSLDNLRG. N-linked (GlcNAc...) asparagine glycosylation occurs at asparagine 472. The helical transmembrane segment at 481–501 threads the bilayer; that stretch reads FVLAPLVIYLFIGTMFLLAGF. Topologically, residues 502-529 are cytoplasmic; sequence VSLFRIRSVIKQQGGPTKTHKLEKLMIR. A helical transmembrane segment spans residues 530 to 550; that stretch reads LGLFTVLYTVPAAVVVACLFY. At 551–581 the chain is on the extracellular side; the sequence is EQHNRPRWEATHNCPCLRDLQPDQARRPDYA. A helical transmembrane segment spans residues 582–602; the sequence is VFMLKYFMCLVVGITSGVWVW. The Cytoplasmic portion of the chain corresponds to 603-684; it reads SGKTLESWRA…YPKQMPLSQV (82 aa). The short motif at 605–610 is the Lys-Thr-X-X-X-Trp motif, mediates interaction with the PDZ domain of Dvl family members element; it reads KTLESW. Residues 630 to 654 are compositionally biased toward gly residues; the sequence is AGGSGPGGGGPGPGGGGGHGGGGGS. A disordered region spans residues 630–655; that stretch reads AGGSGPGGGGPGPGGGGGHGGGGGSL. The PDZ-binding motif lies at 682-684; that stretch reads SQV.

It belongs to the G-protein coupled receptor Fz/Smo family. Component of a Wnt-signaling complex that contains a WNT protein, a FZD protein and LRP5 or LRP6. Interacts directly with LRP5 or LRP6; the interaction is promoted by Wnt-binding and signaling and inhibited by DKK1. Interacts (via the PDZ-binding motif) with GPOC (via its PDZ domain). Interacts with RSPO1 and RSPO3. Interacts with glypican GPC3. In terms of processing, ubiquitinated by ZNRF3, leading to its degradation by the proteasome.

It localises to the membrane. The protein localises to the golgi apparatus. Its subcellular location is the cell membrane. In terms of biological role, receptor for Wnt proteins. Component of the Wnt-Fzd-LRP5-LRP6 complex that triggers beta-catenin signaling through inducing aggregation of receptor-ligand complexes into ribosome-sized signalosomes. The beta-catenin canonical signaling pathway leads to the activation of disheveled proteins, inhibition of GSK-3 kinase, nuclear accumulation of beta-catenin and activation of Wnt target genes. A second signaling pathway involving PKC and calcium fluxes has been seen for some family members, but it is not yet clear if it represents a distinct pathway or if it can be integrated in the canonical pathway, as PKC seems to be required for Wnt-mediated inactivation of GSK-3 kinase. Both pathways seem to involve interactions with G-proteins. May be involved in transduction and intercellular transmission of polarity information during tissue morphogenesis and/or in differentiated tissues. Coreceptor along with RYK of Wnt proteins, such as WNT1. The chain is Frizzled-8 (Fzd8) from Rattus norvegicus (Rat).